Here is a 368-residue protein sequence, read N- to C-terminus: 1-deoxy-D-xylulose 5-phosphate reductoisomerase (368 aa).

8 residues coordinate NADPH: T7, G8, S9, I10, G31, K32, N33, and N113. K114 lines the 1-deoxy-D-xylulose 5-phosphate pocket. Position 115 (E115) interacts with NADPH. Residue D133 coordinates Mn(2+). S134, E135, S158, and H181 together coordinate 1-deoxy-D-xylulose 5-phosphate. E135 is a binding site for Mn(2+). An NADPH-binding site is contributed by G187. 1-deoxy-D-xylulose 5-phosphate is bound by residues S194, N199, K200, and E203. Position 203 (E203) interacts with Mn(2+).

This sequence belongs to the DXR family. Mg(2+) serves as cofactor. The cofactor is Mn(2+).

The enzyme catalyses 2-C-methyl-D-erythritol 4-phosphate + NADP(+) = 1-deoxy-D-xylulose 5-phosphate + NADPH + H(+). It functions in the pathway isoprenoid biosynthesis; isopentenyl diphosphate biosynthesis via DXP pathway; isopentenyl diphosphate from 1-deoxy-D-xylulose 5-phosphate: step 1/6. In terms of biological role, catalyzes the NADPH-dependent rearrangement and reduction of 1-deoxy-D-xylulose-5-phosphate (DXP) to 2-C-methyl-D-erythritol 4-phosphate (MEP). The chain is 1-deoxy-D-xylulose 5-phosphate reductoisomerase from Helicobacter pylori (strain Shi470).